The chain runs to 149 residues: Probable flagellum biosynthesis repressor protein FlbT (149 aa).

It belongs to the FlbT family.

Functionally, has a post-transcriptional repressor function in flagellum biogenesis. Associates with the 5'-UTR of fljK mRNA and promotes its degradation. The chain is Probable flagellum biosynthesis repressor protein FlbT from Rhizobium johnstonii (strain DSM 114642 / LMG 32736 / 3841) (Rhizobium leguminosarum bv. viciae).